A 116-amino-acid chain; its full sequence is Ribonuclease P protein component (116 aa).

Belongs to the RnpA family. In terms of assembly, consists of a catalytic RNA component (M1 or rnpB) and a protein subunit.

It carries out the reaction Endonucleolytic cleavage of RNA, removing 5'-extranucleotides from tRNA precursor.. RNaseP catalyzes the removal of the 5'-leader sequence from pre-tRNA to produce the mature 5'-terminus. It can also cleave other RNA substrates such as 4.5S RNA. The protein component plays an auxiliary but essential role in vivo by binding to the 5'-leader sequence and broadening the substrate specificity of the ribozyme. The protein is Ribonuclease P protein component of Carboxydothermus hydrogenoformans (strain ATCC BAA-161 / DSM 6008 / Z-2901).